Here is a 373-residue protein sequence, read N- to C-terminus: UDP-N-acetylglucosamine--N-acetylmuramyl-(pentapeptide) pyrophosphoryl-undecaprenol N-acetylglucosamine transferase (373 aa).

UDP-N-acetyl-alpha-D-glucosamine contacts are provided by residues T10 to G12, N124, R166, S196, and Q301.

This sequence belongs to the glycosyltransferase 28 family. MurG subfamily.

It localises to the cell membrane. It carries out the reaction di-trans,octa-cis-undecaprenyl diphospho-N-acetyl-alpha-D-muramoyl-L-alanyl-D-glutamyl-meso-2,6-diaminopimeloyl-D-alanyl-D-alanine + UDP-N-acetyl-alpha-D-glucosamine = di-trans,octa-cis-undecaprenyl diphospho-[N-acetyl-alpha-D-glucosaminyl-(1-&gt;4)]-N-acetyl-alpha-D-muramoyl-L-alanyl-D-glutamyl-meso-2,6-diaminopimeloyl-D-alanyl-D-alanine + UDP + H(+). It participates in cell wall biogenesis; peptidoglycan biosynthesis. Functionally, cell wall formation. Catalyzes the transfer of a GlcNAc subunit on undecaprenyl-pyrophosphoryl-MurNAc-pentapeptide (lipid intermediate I) to form undecaprenyl-pyrophosphoryl-MurNAc-(pentapeptide)GlcNAc (lipid intermediate II). This is UDP-N-acetylglucosamine--N-acetylmuramyl-(pentapeptide) pyrophosphoryl-undecaprenol N-acetylglucosamine transferase from Desulforudis audaxviator (strain MP104C).